A 187-amino-acid chain; its full sequence is F-box protein At5g41720 (187 aa).

The 48-residue stretch at 2 to 49 (MMNSPLDYDVLLEIMSYCPATEMAKFRLLSKECNKRSYEMSFINRHLH) folds into the F-box domain.

The sequence is that of F-box protein At5g41720 from Arabidopsis thaliana (Mouse-ear cress).